Reading from the N-terminus, the 137-residue chain is Large ribosomal subunit protein uL16 (137 aa).

The protein belongs to the universal ribosomal protein uL16 family. In terms of assembly, part of the 50S ribosomal subunit.

Functionally, binds 23S rRNA and is also seen to make contacts with the A and possibly P site tRNAs. This Streptococcus equi subsp. zooepidemicus (strain H70) protein is Large ribosomal subunit protein uL16.